The sequence spans 330 residues: GTPase Obg (330 aa).

Residues 1 to 159 (MHFIDEVKIY…MWIHLRLKLL (159 aa)) form the Obg domain. The region spanning 160–327 (SDVGLVGLPN…IVKLALEIIK (168 aa)) is the OBG-type G domain. GTP is bound by residues 166-173 (GLPNAGKS), 191-195 (FTTLV), 212-215 (DIPG), 279-282 (NKCD), and 308-310 (STY). The Mg(2+) site is built by Ser173 and Thr193.

The protein belongs to the TRAFAC class OBG-HflX-like GTPase superfamily. OBG GTPase family. In terms of assembly, monomer. It depends on Mg(2+) as a cofactor.

The protein localises to the cytoplasm. An essential GTPase which binds GTP, GDP and possibly (p)ppGpp with moderate affinity, with high nucleotide exchange rates and a fairly low GTP hydrolysis rate. Plays a role in control of the cell cycle, stress response, ribosome biogenesis and in those bacteria that undergo differentiation, in morphogenesis control. This chain is GTPase Obg, found in Rickettsia typhi (strain ATCC VR-144 / Wilmington).